Reading from the N-terminus, the 502-residue chain is ATP synthase subunit alpha (502 aa).

169–176 (GDKQTGKT) provides a ligand contact to ATP.

The protein belongs to the ATPase alpha/beta chains family. F-type ATPases have 2 components, CF(1) - the catalytic core - and CF(0) - the membrane proton channel. CF(1) has five subunits: alpha(3), beta(3), gamma(1), delta(1), epsilon(1). CF(0) has three main subunits: a(1), b(2) and c(9-12). The alpha and beta chains form an alternating ring which encloses part of the gamma chain. CF(1) is attached to CF(0) by a central stalk formed by the gamma and epsilon chains, while a peripheral stalk is formed by the delta and b chains.

It is found in the cell membrane. It catalyses the reaction ATP + H2O + 4 H(+)(in) = ADP + phosphate + 5 H(+)(out). Produces ATP from ADP in the presence of a proton gradient across the membrane. The alpha chain is a regulatory subunit. In Lachnoclostridium phytofermentans (strain ATCC 700394 / DSM 18823 / ISDg) (Clostridium phytofermentans), this protein is ATP synthase subunit alpha.